We begin with the raw amino-acid sequence, 217 residues long: Thiamine-phosphate synthase (217 aa).

Residues 42–46 (QFRDK) and Asp77 contribute to the 4-amino-2-methyl-5-(diphosphooxymethyl)pyrimidine site. Asp78 and Asp97 together coordinate Mg(2+). Position 117 (Ser117) interacts with 4-amino-2-methyl-5-(diphosphooxymethyl)pyrimidine. 144-146 (TIS) is a 2-[(2R,5Z)-2-carboxy-4-methylthiazol-5(2H)-ylidene]ethyl phosphate binding site. A 4-amino-2-methyl-5-(diphosphooxymethyl)pyrimidine-binding site is contributed by Lys147. Residues Gly175 and 195–196 (IT) contribute to the 2-[(2R,5Z)-2-carboxy-4-methylthiazol-5(2H)-ylidene]ethyl phosphate site.

The protein belongs to the thiamine-phosphate synthase family. Mg(2+) serves as cofactor.

It catalyses the reaction 2-[(2R,5Z)-2-carboxy-4-methylthiazol-5(2H)-ylidene]ethyl phosphate + 4-amino-2-methyl-5-(diphosphooxymethyl)pyrimidine + 2 H(+) = thiamine phosphate + CO2 + diphosphate. It carries out the reaction 2-(2-carboxy-4-methylthiazol-5-yl)ethyl phosphate + 4-amino-2-methyl-5-(diphosphooxymethyl)pyrimidine + 2 H(+) = thiamine phosphate + CO2 + diphosphate. The catalysed reaction is 4-methyl-5-(2-phosphooxyethyl)-thiazole + 4-amino-2-methyl-5-(diphosphooxymethyl)pyrimidine + H(+) = thiamine phosphate + diphosphate. Its pathway is cofactor biosynthesis; thiamine diphosphate biosynthesis; thiamine phosphate from 4-amino-2-methyl-5-diphosphomethylpyrimidine and 4-methyl-5-(2-phosphoethyl)-thiazole: step 1/1. Functionally, condenses 4-methyl-5-(beta-hydroxyethyl)thiazole monophosphate (THZ-P) and 2-methyl-4-amino-5-hydroxymethyl pyrimidine pyrophosphate (HMP-PP) to form thiamine monophosphate (TMP). This is Thiamine-phosphate synthase from Levilactobacillus brevis (strain ATCC 367 / BCRC 12310 / CIP 105137 / JCM 1170 / LMG 11437 / NCIMB 947 / NCTC 947) (Lactobacillus brevis).